The chain runs to 90 residues: Arminin 7722 (90 aa).

An N-terminal signal peptide occupies residues 1 to 18 (MRSASLILFVAIVALTYA). A propeptide spanning residues 19 to 59 (RSYEDIKEEIRNEVENEILDDLEEENDELDDNAQEVSDPRA) is cleaved from the precursor. Thr-87 is modified (threonine amide).

Belongs to the arminin family. Expressed in entodermal epithelium along the body column.

The protein localises to the secreted. Its subcellular location is the target cell membrane. Functionally, antimicrobial peptide with a broad-spectrum antimicrobial activity. Keeps its antibacterial activity under a wide range of salt concentrations that mimic physiological conditions of human blood, which is surprising, since Hydra is an obligate freshwater animal with nearly no salt tolerance. Does not affect red blood cells. The chain is Arminin 7722 from Hydra vulgaris (Hydra).